The chain runs to 340 residues: MSEKNAYAKSGVDVEAGYEVVERIKKHVARTERAGVMGVLGGFGGMFDLSKTGVKEPVLVSGTDGVGTKLMLAIKYDKHDTIGQDCVAMCVNDIIAAGAEPLYFLDYVATGKNNPVKLEEVVSGVAEGCVQAGAALIGGETAEMPGMYGEDDYDLAGFAVGVAEKSQIIDGSKVKEGDILLGLASSGIHSNGYSLVRRVFADYTGKELLPELEGKQLKDVLLEPTRIYVKAALPLIKEELVNGIGHITGGGFIENIPRMFADDLAAEIDEDKVPVLPIFKALEKYGDIKHEEMFEIFNMGVGLMLAVSPENVNRVKELLDEPVYEIGRIIKKADDSVVIK.

It belongs to the AIR synthase family.

The protein resides in the cytoplasm. The enzyme catalyses 2-formamido-N(1)-(5-O-phospho-beta-D-ribosyl)acetamidine + ATP = 5-amino-1-(5-phospho-beta-D-ribosyl)imidazole + ADP + phosphate + H(+). It participates in purine metabolism; IMP biosynthesis via de novo pathway; 5-amino-1-(5-phospho-D-ribosyl)imidazole from N(2)-formyl-N(1)-(5-phospho-D-ribosyl)glycinamide: step 2/2. The sequence is that of Phosphoribosylformylglycinamidine cyclo-ligase from Streptococcus pyogenes serotype M18 (strain MGAS8232).